The sequence spans 180 residues: Probable galaptin lec-8 (180 aa).

Positions 11–138 (SAHAIREQLR…AAHIDEISFS (128 aa)) constitute a Galectin domain.

The protein is Probable galaptin lec-8 (lec-8) of Caenorhabditis elegans.